The sequence spans 1256 residues: Octopamine receptor beta-3R (1256 aa).

At 1 to 143 (MSGVNVADLL…LDLSLLLLKG (143 aa)) the chain is on the extracellular side. N-linked (GlcNAc...) asparagine glycans are attached at residues Asn36, Asn113, and Asn117. A helical transmembrane segment spans residues 144–164 (FIFSSIILAAVLGNALVIISV). Over 165-171 (QRNRKLR) the chain is Cytoplasmic. Residues 172-192 (VITNYFVVSLAMADMLVALCA) form a helical membrane-spanning segment. Over 193–213 (MTFNASVELSGGKWMFGPFMC) the chain is Extracellular. An N-linked (GlcNAc...) asparagine glycan is attached at Asn196. A helical membrane pass occupies residues 214–236 (NVYNSLDVYFSTASILHLCCISV). Topologically, residues 237–258 (DRYYAIVRPLEYPLNMTHKTVC) are cytoplasmic. Residues 259 to 279 (FMLANVWILPALISFTPIFLG) form a helical membrane-spanning segment. The Extracellular portion of the chain corresponds to 280-305 (WYTTEEHLREISLHPDQCSFVVNKAY). A helical transmembrane segment spans residues 306–326 (ALISSSVSFWIPGIVMLVMYW). Residues 327–1169 (RIFKEAIRQR…WKAEHKAART (843 aa)) lie on the Cytoplasmic side of the membrane. Disordered stretches follow at residues 377-427 (AREE…DLRD), 480-512 (ELDKEHSHPNGPQQQLSLTSGSGNSEPEPESTA), 665-698 (LSHSYNGCGGGKERKLERRQRQHSDTDSTPNKPD), 751-774 (GESPQQPATPPPSLSPPELPEPSG), and 1087-1117 (DTTVTTSSKRSIHEQTPDLGQRPASSSSSTR). Acidic residues predominate over residues 396–406 (TDEDDDRDECD). Positions 489–498 (NGPQQQLSLT) are enriched in polar residues. Pro residues predominate over residues 757–770 (PATPPPSLSPPELP). A helical membrane pass occupies residues 1170–1190 (LGIIMGVFLLCWLPFFLWYVI). Residues 1191 to 1202 (TSLCGPACPCPD) lie on the Extracellular side of the membrane. Residues 1203–1223 (VLVVVLFWIGYFNSTLNPLIY) form a helical membrane-spanning segment. Topologically, residues 1224–1256 (AYFNRDFREAFRNTLECVLPCLEKRNPYNAYYV) are cytoplasmic.

It belongs to the G-protein coupled receptor 1 family. In terms of tissue distribution, in the adult, expressed in the inferior and superior protocerebrum, the posterior lateral protocerebrum, the deutocerebrum, the surface of the subesophageal ganglion, the lateral cell body region, the cortical layer of the ventral nerve cord and the optic lobe medulla of the central nervous system (CNS). Also expressed in the nurse cells and follicle cells of the egg chambers in the ovary at oogenic stages 1-10, and spermatogonia and spermatocytes in the testis. Expressed ubiquitously in the embryonic CNS. In larvae, expressed in the ventral cortical layer of the ventral nerve cord, the cortical layer of the brain lobes, salivary glands, midgut, imaginal disks and developing reproductive organs. Expressed in the larval prothoracic gland with weak expression in other regions of the ring gland.

It localises to the cell membrane. Functionally, autoreceptor for octopamine, which is a neurotransmitter, neurohormone, and neuromodulator in invertebrates. Probably also acts as a receptor for tyramine during ecdysone biosynthesis. Required for the biosynthesis of the steroid hormone ecdysone which is necessary for metamorphosis. Involved in activation of prothoracicotropic hormone and insulin-like peptide signaling which is required for the expression of ecdysone biosynthetic genes. This Drosophila melanogaster (Fruit fly) protein is Octopamine receptor beta-3R.